A 687-amino-acid chain; its full sequence is MFAFRNRAVTQTLLVRRYSTKRIPQNLTEKIVQRYAVGLPEGKQVQSGDYVSIRPSHCMTHDNSWPVATKFKGLGAKAVKDNRQVVMTLDHDVQNKSEKNLEKYANIENFAGEQGIDFYPAGRGIGHQVMVEEGYAFPYNLTVASDSHSNMYGGIGCLGTPIVRTDAASVWATGQTWWQIPPVARVELKGQLPAGVFGKDVIIALCGIFNNDEVLNHAIEFVGDGVEHLSVDERLTIANMTTEWGALTGLFPVDETLRQWYEYRLTRLPQPHARVNDGTVAALKDAVQADTDAKYAKNLTIDLSTLSPFLSGPNSVKVYNSLADLSAQDIKINKAYLVSCTNSRLSDIEAAANVIKNNKVAEGVEFYVAAASSFVQKDAEASGAWQTLINAGAKPLPAGCGPCIGLGTGLLEDGEVGISATNRNFKGRMGSKDALAYLASPEVVAASAVLGKIGFPEEVYGSPVPGAKGVSSSISVTEAVEAEADAEAAESDPAPSGGVLDGFPAQITGELVLCDADNINTDGIYPGKYTYQDDVPREKMAEVCMENYDPDFGSKTGAGDIIVSGFNFGTGSSREQAATCILARDMQLVIAGSFGNIFSRNSINNALLTLEIPALINKLRKRYEGQPAELTRRTGWFATWDVPAATVTVTDGKNGPVILKQKVGELGQNLQEIIVKGGLEGWVKAQL.

A mitochondrion-targeting transit peptide spans 1 to 18; it reads MFAFRNRAVTQTLLVRRY. [4Fe-4S] cluster contacts are provided by Cys340, Cys400, and Cys403. Acidic residues predominate over residues 481–490; the sequence is EAEADAEAAE. The tract at residues 481-500 is disordered; the sequence is EAEADAEAAESDPAPSGGVL.

The protein belongs to the aconitase/IPM isomerase family. [4Fe-4S] cluster is required as a cofactor.

The protein localises to the mitochondrion. It catalyses the reaction (2R,3S)-homoisocitrate = cis-homoaconitate + H2O. It functions in the pathway amino-acid biosynthesis; L-lysine biosynthesis via AAA pathway; L-alpha-aminoadipate from 2-oxoglutarate: step 3/5. Functionally, catalyzes the reversible hydration of cis-homoaconitate to (2R,3S)-homoisocitrate, a step in the alpha-aminoadipate pathway for lysine biosynthesis. The protein is Homoaconitase, mitochondrial (LYS4) of Yarrowia lipolytica (strain CLIB 122 / E 150) (Yeast).